Consider the following 373-residue polypeptide: Probable tRNA sulfurtransferase (373 aa).

A THUMP domain is found at 54–158 (NKNIEELSKV…NDVAYFYYKI (105 aa)). Residues 176–177 (LF), 201–202 (NF), Lys256, Gly278, and Gln287 each bind ATP.

It belongs to the ThiI family.

It is found in the cytoplasm. The enzyme catalyses [ThiI sulfur-carrier protein]-S-sulfanyl-L-cysteine + a uridine in tRNA + 2 reduced [2Fe-2S]-[ferredoxin] + ATP + H(+) = [ThiI sulfur-carrier protein]-L-cysteine + a 4-thiouridine in tRNA + 2 oxidized [2Fe-2S]-[ferredoxin] + AMP + diphosphate. It carries out the reaction [ThiS sulfur-carrier protein]-C-terminal Gly-Gly-AMP + S-sulfanyl-L-cysteinyl-[cysteine desulfurase] + AH2 = [ThiS sulfur-carrier protein]-C-terminal-Gly-aminoethanethioate + L-cysteinyl-[cysteine desulfurase] + A + AMP + 2 H(+). The protein operates within cofactor biosynthesis; thiamine diphosphate biosynthesis. In terms of biological role, catalyzes the ATP-dependent transfer of a sulfur to tRNA to produce 4-thiouridine in position 8 of tRNAs, which functions as a near-UV photosensor. Also catalyzes the transfer of sulfur to the sulfur carrier protein ThiS, forming ThiS-thiocarboxylate. This is a step in the synthesis of thiazole, in the thiamine biosynthesis pathway. The sulfur is donated as persulfide by IscS. This Saccharolobus islandicus (strain L.S.2.15 / Lassen #1) (Sulfolobus islandicus) protein is Probable tRNA sulfurtransferase.